The sequence spans 365 residues: Myocyte-specific enhancer factor 2B (365 aa).

The region spanning 3-57 is the MADS-box domain; sequence RKKIQISRILDQRNRQVTFTKRKFGLMKKAYELSVLCDCEIALIIFNSANRLFQY. The mef2-type DNA-binding region spans 58–86; the sequence is ASTDMDRVLLKYTEYSEPHESRTNTDILE. Disordered stretches follow at residues 94–124, 142–309, and 321–365; these read GLDG…GDPA, VVYG…SPGP, and AGCP…KTQQ. Acidic residues predominate over residues 98–108; sequence PELEPDEGPEE. The span at 223 to 240 shows a compositional bias: polar residues; the sequence is NTSRSLYSGLQNPCSTAT. 2 stretches are compositionally biased toward low complexity: residues 277–289 and 326–346; these read PQSA…SLRP and PTAG…SPGT. Positions 354-365 are enriched in polar residues; it reads TSLQASSEKTQQ.

It belongs to the MEF2 family. In terms of assembly, interacts with HDAC7. Heterodimer. Interacts with HDAC9. In terms of tissue distribution, expressed in skeletal and cardiac muscle and brain.

Its subcellular location is the nucleus. In terms of biological role, transcriptional activator which binds specifically to the MEF2 element, 5'-YTA[AT](4)TAR-3', found in numerous muscle-specific genes. Activates transcription via this element. May be involved in muscle-specific and/or growth factor-related transcription. In Homo sapiens (Human), this protein is Myocyte-specific enhancer factor 2B (MEF2B).